Consider the following 403-residue polypeptide: MDKTSINKVVLAYSGGLDTSIIVKWLQDTYQCEVVTFTADIGQGEEVEPARVKAEAAGVKEIYIEDLREEFARNFVFPMFRANAIYEGEYLLGTSIARPLISKRLVEIAKQVGADAISHGATGKGNDQVRFELNAYALNADIQVIAPWREWDLSSRESLMDYAQKHGIEIDYKKQSKKSPYSMDANLLHISYEGNILEDPWTEPEEDMWRWTLSPENAPDKVEYVEMTFKKGDIIAINGKVMSPASVMEDLNKRAGAHGIGRDDIVENRFVGMKSRGCYETPSGTVMLKARRAMESLTLDRAAAHLKDELMPKYAEMVYNGFWFAPEREMLQAAIDKTQETVSGVVRLKFYKGNVTVVGRQSKNSLFSEKIVTFENDDGIYNQRDAAGFIKLNALRLCLNTIK.

ATP is bound by residues 12–20 (AYSGGLDTS) and A39. L-citrulline-binding residues include Y90 and S95. G120 is an ATP binding site. L-aspartate-binding residues include T122, N126, and D127. Residue N126 coordinates L-citrulline. Positions 130, 182, 191, 267, and 279 each coordinate L-citrulline.

It belongs to the argininosuccinate synthase family. Type 1 subfamily. Homotetramer.

It localises to the cytoplasm. The enzyme catalyses L-citrulline + L-aspartate + ATP = 2-(N(omega)-L-arginino)succinate + AMP + diphosphate + H(+). It functions in the pathway amino-acid biosynthesis; L-arginine biosynthesis; L-arginine from L-ornithine and carbamoyl phosphate: step 2/3. This Vesicomyosocius okutanii subsp. Calyptogena okutanii (strain HA) protein is Argininosuccinate synthase.